The following is a 202-amino-acid chain: MPCPGLQENVTIYKLSIDICRSSRSSSPMNLLATSPSASTAFFQRSAGRWHSQRRYYTLNSDQEPLEAISAIEVVFLPAEHPHLKPLAIAHHLSPDQAFQCGAKVTWESTYTNVQRKPLKGETIFGIRDQLMYRDRGFSTTAPIVAEFELIQPHVMRLQTAYDGASFEEEIKFVGDKHRTRQTITSRAGQELMIAQYLETRL.

This sequence belongs to the CpcS/CpeS biliprotein lyase family.

Its function is as follows. Covalently attaches a chromophore to Cys residue(s) of phycobiliproteins. The chain is Putative chromophore lyase CpcV (cpcV) from Picosynechococcus sp. (strain ATCC 27264 / PCC 7002 / PR-6) (Agmenellum quadruplicatum).